A 520-amino-acid chain; its full sequence is Maturase K (520 aa).

Belongs to the intron maturase 2 family. MatK subfamily.

The protein resides in the plastid. It localises to the chloroplast. Its function is as follows. Usually encoded in the trnK tRNA gene intron. Probably assists in splicing its own and other chloroplast group II introns. The polypeptide is Maturase K (Cycas taitungensis (Prince sago)).